A 470-amino-acid chain; its full sequence is Acetyl-CoA decarbonylase/synthase complex subunit beta 2 (470 aa).

[Ni-Fe-S] cluster is bound by residues Cys189, Cys192, Cys278, and Cys280.

Belongs to the CdhC family. As to quaternary structure, monomer. The ACDS complex is made up of alpha, epsilon, beta, gamma and delta chains with a probable stoichiometry of (alpha(2)epsilon(2))(4)-beta(8)-(gamma(1)delta(1))(8) (Potential). It depends on [Ni-Fe-S] cluster as a cofactor.

The catalysed reaction is Co(I)-[corrinoid Fe-S protein] + acetyl-CoA + H(+) = methyl-Co(III)-[corrinoid Fe-S protein] + CO + CoA. Its pathway is one-carbon metabolism; methanogenesis from acetate. Its function is as follows. Part of a complex that catalyzes the reversible cleavage of acetyl-CoA, allowing growth on acetate as sole source of carbon and energy. The alpha-epsilon complex generates CO from CO(2), while the beta subunit (this protein) combines the CO with CoA and a methyl group to form acetyl-CoA. The methyl group, which is incorporated into acetyl-CoA, is transferred to the beta subunit by a corrinoid iron-sulfur protein (the gamma-delta complex). The sequence is that of Acetyl-CoA decarbonylase/synthase complex subunit beta 2 (cdhC2) from Methanosarcina acetivorans (strain ATCC 35395 / DSM 2834 / JCM 12185 / C2A).